Consider the following 143-residue polypeptide: Putative mediator of RNA polymerase II transcription subunit 11 (143 aa).

Positions isoleucine 97–aspartate 143 form a coiled coil. The segment at glutamate 109 to aspartate 143 is disordered. The segment covering asparagine 111–glutamine 136 has biased composition (basic and acidic residues).

Belongs to the Mediator complex subunit 11 family. As to quaternary structure, component of the Mediator complex.

It localises to the nucleus. In terms of biological role, component of the Mediator complex, a coactivator involved in the regulated transcription of nearly all RNA polymerase II-dependent genes. Mediator functions as a bridge to convey information from gene-specific regulatory proteins to the basal RNA polymerase II transcription machinery. Mediator is recruited to promoters by direct interactions with regulatory proteins and serves as a scaffold for the assembly of a functional pre-initiation complex with RNA polymerase II and the general transcription factors. The polypeptide is Putative mediator of RNA polymerase II transcription subunit 11 (med11) (Dictyostelium discoideum (Social amoeba)).